The chain runs to 208 residues: UPF0316 protein SERP1448 (208 aa).

3 helical membrane passes run 8–28, 40–60, and 66–86; these read PWLMVLAIFIINVCYVTFLTM, VAAVVSFMEVLVYVVGLGLVM, and IQNIFAYALGFSVGIIVGMKI.

This sequence belongs to the UPF0316 family.

It is found in the cell membrane. The polypeptide is UPF0316 protein SERP1448 (Staphylococcus epidermidis (strain ATCC 35984 / DSM 28319 / BCRC 17069 / CCUG 31568 / BM 3577 / RP62A)).